Here is a 411-residue protein sequence, read N- to C-terminus: LL-diaminopimelate aminotransferase (411 aa).

2 residues coordinate substrate: Tyr-15 and Gly-42. Pyridoxal 5'-phosphate contacts are provided by residues Tyr-72, 108 to 109, Tyr-132, Asn-188, Tyr-219, and 247 to 249; these read AK and SFS. Substrate is bound by residues Lys-109, Tyr-132, and Asn-188. Lys-250 is subject to N6-(pyridoxal phosphate)lysine. The pyridoxal 5'-phosphate site is built by Arg-258 and Asn-293. Residues Asn-293 and Arg-389 each contribute to the substrate site.

Belongs to the class-I pyridoxal-phosphate-dependent aminotransferase family. LL-diaminopimelate aminotransferase subfamily. In terms of assembly, homodimer. It depends on pyridoxal 5'-phosphate as a cofactor.

The catalysed reaction is (2S,6S)-2,6-diaminopimelate + 2-oxoglutarate = (S)-2,3,4,5-tetrahydrodipicolinate + L-glutamate + H2O + H(+). It functions in the pathway amino-acid biosynthesis; L-lysine biosynthesis via DAP pathway; LL-2,6-diaminopimelate from (S)-tetrahydrodipicolinate (aminotransferase route): step 1/1. Functionally, involved in the synthesis of meso-diaminopimelate (m-DAP or DL-DAP), required for both lysine and peptidoglycan biosynthesis. Catalyzes the direct conversion of tetrahydrodipicolinate to LL-diaminopimelate. Is also able to catalyze the reverse reaction in vitro, i.e. the transamination of LL-diaminopimelate with 2-oxoglutarate to produce tetrahydrodipicolinate and glutamate. Can also use m-DAP instead of LL-DAP as the amino-group donor, and oxaloacetate or pyruvate as the amino-group acceptor. This chain is LL-diaminopimelate aminotransferase, found in Desulfitobacterium hafniense (strain DSM 10664 / DCB-2).